Here is a 184-residue protein sequence, read N- to C-terminus: Endothelial cell-specific molecule 1 (184 aa).

A signal peptide spans 1–21; the sequence is MKSLLLLTTLLVPLHLGMAWS. Residues 24-102 enclose the IGFBP N-terminal domain; it reads YAVDCPEHCD…GDEFGICKDC (79 aa). 6 disulfides stabilise this stretch: Cys-28-Cys-51, Cys-32-Cys-53, Cys-37-Cys-54, Cys-43-Cys-57, Cys-65-Cys-83, and Cys-77-Cys-99. The tract at residues 145–184 is disordered; it reads RTSASHTERDSASGDGNAVREEIGEGNAARPSVMKWLNPR. Over residues 150 to 167 the composition is skewed to basic and acidic residues; the sequence is HTERDSASGDGNAVREEI. Ser-157 carries an O-linked (Xyl...) (chondroitin sulfate) serine glycan.

O-glycosylated; contains chondroitin sulfate and dermatan sulfate.

The protein localises to the secreted. Functionally, involved in angiogenesis; promotes angiogenic sprouting. May have potent implications in lung endothelial cell-leukocyte interactions. This chain is Endothelial cell-specific molecule 1 (Esm1), found in Mus musculus (Mouse).